A 141-amino-acid polypeptide reads, in one-letter code: Large ribosomal subunit protein uL11 (141 aa).

Belongs to the universal ribosomal protein uL11 family. Part of the ribosomal stalk of the 50S ribosomal subunit. Interacts with L10 and the large rRNA to form the base of the stalk. L10 forms an elongated spine to which L12 dimers bind in a sequential fashion forming a multimeric L10(L12)X complex. Post-translationally, one or more lysine residues are methylated.

Functionally, forms part of the ribosomal stalk which helps the ribosome interact with GTP-bound translation factors. The chain is Large ribosomal subunit protein uL11 from Streptococcus pneumoniae (strain Hungary19A-6).